A 319-amino-acid chain; its full sequence is Lipoyl synthase (319 aa).

Residues C61, C66, C72, C87, C91, C94, and S300 each coordinate [4Fe-4S] cluster. The 217-residue stretch at 73-289 (WDKKHATFMI…ESVAYSKGFL (217 aa)) folds into the Radical SAM core domain.

The protein belongs to the radical SAM superfamily. Lipoyl synthase family. It depends on [4Fe-4S] cluster as a cofactor.

The protein resides in the cytoplasm. The catalysed reaction is [[Fe-S] cluster scaffold protein carrying a second [4Fe-4S](2+) cluster] + N(6)-octanoyl-L-lysyl-[protein] + 2 oxidized [2Fe-2S]-[ferredoxin] + 2 S-adenosyl-L-methionine + 4 H(+) = [[Fe-S] cluster scaffold protein] + N(6)-[(R)-dihydrolipoyl]-L-lysyl-[protein] + 4 Fe(3+) + 2 hydrogen sulfide + 2 5'-deoxyadenosine + 2 L-methionine + 2 reduced [2Fe-2S]-[ferredoxin]. The protein operates within protein modification; protein lipoylation via endogenous pathway; protein N(6)-(lipoyl)lysine from octanoyl-[acyl-carrier-protein]: step 2/2. In terms of biological role, catalyzes the radical-mediated insertion of two sulfur atoms into the C-6 and C-8 positions of the octanoyl moiety bound to the lipoyl domains of lipoate-dependent enzymes, thereby converting the octanoylated domains into lipoylated derivatives. This is Lipoyl synthase from Rhodopseudomonas palustris (strain BisB18).